The primary structure comprises 72 residues: DNA-directed RNA polymerase subunit omega (72 aa).

Belongs to the RNA polymerase subunit omega family. In terms of assembly, the RNAP catalytic core consists of 2 alpha, 1 beta, 1 beta' and 1 omega subunit. When a sigma factor is associated with the core the holoenzyme is formed, which can initiate transcription.

It catalyses the reaction RNA(n) + a ribonucleoside 5'-triphosphate = RNA(n+1) + diphosphate. Promotes RNA polymerase assembly. Latches the N- and C-terminal regions of the beta' subunit thereby facilitating its interaction with the beta and alpha subunits. In Limosilactobacillus reuteri (strain DSM 20016) (Lactobacillus reuteri), this protein is DNA-directed RNA polymerase subunit omega.